Consider the following 291-residue polypeptide: Flavin-dependent thymidylate synthase (291 aa).

The ThyX domain occupies 31–241 (GFVRVVDYMG…PMVHAAFVEY (211 aa)). FAD-binding positions include S77, 100–102 (RHR), and E108. DUMP contacts are provided by residues 97–100 (QWVR), 108–112 (EYSAR), and R180. The ThyX motif motif lies at 100-110 (RHRTASINEYS). An FAD-binding site is contributed by 196-198 (NLH). DUMP is bound at residue R207. The active-site Involved in ionization of N3 of dUMP, leading to its activation is R207.

This sequence belongs to the thymidylate synthase ThyX family. As to quaternary structure, homotetramer. Requires FAD as cofactor.

It carries out the reaction dUMP + (6R)-5,10-methylene-5,6,7,8-tetrahydrofolate + NADPH + H(+) = dTMP + (6S)-5,6,7,8-tetrahydrofolate + NADP(+). Its pathway is pyrimidine metabolism; dTTP biosynthesis. In terms of biological role, catalyzes the reductive methylation of 2'-deoxyuridine-5'-monophosphate (dUMP) to 2'-deoxythymidine-5'-monophosphate (dTMP) while utilizing 5,10-methylenetetrahydrofolate (mTHF) as the methyl donor, and NADPH and FADH(2) as the reductant. This Anaplasma marginale (strain St. Maries) protein is Flavin-dependent thymidylate synthase.